The chain runs to 464 residues: Citrate synthase, mitochondrial (464 aa).

The transit peptide at methionine 1–serine 27 directs the protein to the mitochondrion. The SIFI-degron motif lies at alanine 2–leucine 21. The residue at position 57 (lysine 57) is an N6-succinyllysine. At lysine 76 the chain carries N6-acetyllysine; alternate. Residue lysine 76 is modified to N6-succinyllysine; alternate. Lysine 103 and lysine 193 each carry N6-succinyllysine. At serine 226 the chain carries Phosphoserine. Histidine 301 is a catalytic residue. N6-acetyllysine; alternate is present on residues lysine 321 and lysine 327. Lysine 321 and lysine 327 each carry N6-succinyllysine; alternate. The active site involves histidine 347. Arginine 356 contacts oxaloacetate. Residue lysine 375 is modified to N6-acetyllysine; alternate. Position 375 is an N6-succinyllysine; alternate (lysine 375). Residue lysine 382 is modified to N6-acetyllysine. Lysine 393 bears the N6-acetyllysine; alternate mark. Position 393 is an N6-succinyllysine; alternate (lysine 393). N6,N6,N6-trimethyllysine is present on lysine 395. Residue aspartate 402 is part of the active site. The oxaloacetate site is built by arginine 428 and arginine 448. Lysine 450 is modified (N6-succinyllysine). Lysine 459 carries the N6-acetyllysine; alternate modification. Lysine 459 is modified (N6-succinyllysine; alternate).

This sequence belongs to the citrate synthase family. Homodimer. In terms of processing, methylated. Trimethylation at Lys-395 by CSKMT decreases citrate synthase activity. Post-translationally, in response to mitochondrial stress, the precursor protein is ubiquitinated by the SIFI complex in the cytoplasm before mitochondrial import, leading to its degradation. Within the SIFI complex, UBR4 initiates ubiquitin chain that are further elongated or branched by KCMF1.

The protein localises to the mitochondrion matrix. It catalyses the reaction oxaloacetate + acetyl-CoA + H2O = citrate + CoA + H(+). It functions in the pathway carbohydrate metabolism; tricarboxylic acid cycle; isocitrate from oxaloacetate: step 1/2. Key enzyme of the Krebs tricarboxylic acid cycle which catalyzes the synthesis of citrate from acetyl coenzyme A and oxaloacetate. The sequence is that of Citrate synthase, mitochondrial (Cs) from Mus musculus (Mouse).